The sequence spans 293 residues: Protease HtpX (293 aa).

2 helical membrane passes run 4-24 and 34-54; these read IALF…VLSL and GLLI…LLMS. His-139 contributes to the Zn(2+) binding site. The active site involves Glu-140. Position 143 (His-143) interacts with Zn(2+). 2 helical membrane passes run 158–178 and 193–213; these read VVNT…AGFL and LIYF…ASII. Zn(2+) is bound at residue Glu-222.

Belongs to the peptidase M48B family. It depends on Zn(2+) as a cofactor.

It localises to the cell inner membrane. The polypeptide is Protease HtpX (Salmonella agona (strain SL483)).